Consider the following 456-residue polypeptide: Keratin, type I cytoskeletal 12 (456 aa).

Residues 1–19 (MSLSVRTSALSRRSSSQNG) are compositionally biased toward polar residues. The disordered stretch occupies residues 1 to 25 (MSLSVRTSALSRRSSSQNGVAGRPW). The tract at residues 1 to 114 (MSLSVRTSAL…GNDGGLLSGS (114 aa)) is head. The interval 115–150 (EKETMQNLNDRLASYLGKVRALEEANAELENKIREW) is coil 1A. In terms of domain architecture, IF rod spans 115-402 (EKETMQNLND…RLLEGDTQGD (288 aa)). The linker 1 stretch occupies residues 154–171 (RRTGDSGSQSDYSKYYPL). The tract at residues 172-263 (IEDLKNKIIS…KNHEEELQSF (92 aa)) is coil 1B. The segment at 264–286 (QAGGPGEVNVEMDAAPGVDLTKS) is linker 12. The segment at 287 to 397 (GELRKEINSN…IETYRRLLEG (111 aa)) is coil 2. The segment at 398–456 (DTQGDGFDESLSLTVSKPQAPSVDSSKDPNKTRKIKTVVQEIVNGEVVSSQVQELEEAM) is tail. Residues 405-430 (DESLSLTVSKPQAPSVDSSKDPNKTR) are disordered. Residues 408-421 (LSLTVSKPQAPSVD) show a composition bias toward polar residues.

The protein belongs to the intermediate filament family. Heterotetramer of two type I and two type II keratins. Keratin-3 associates with keratin-12.

Functionally, involved in corneal epithelium organization, integrity and corneal keratin expression. In Rattus norvegicus (Rat), this protein is Keratin, type I cytoskeletal 12.